Here is a 299-residue protein sequence, read N- to C-terminus: Delta-9 desaturase-like 1 protein (299 aa).

The next 2 membrane-spanning stretches (helical) occupy residues 31-51 and 55-75; these read IDIA…LAPF and WEAL…ITFS. Residues 77-82 carry the Histidine box-1 motif; the sequence is HRNLTH. The Histidine box-2 signature appears at 114-118; sequence HRFHH. 2 helical membrane passes run 174–194 and 198–218; these read IGLH…LPYL and VGVG…ACHI. The Histidine box-3 signature appears at 246–250; the sequence is HNNHH. A helical transmembrane segment spans residues 262–282; the sequence is WYQVDLTWYLICFFQALGLAT.

This sequence belongs to the fatty acid desaturase type 1 family. Requires Fe cation as cofactor.

It localises to the endoplasmic reticulum membrane. It functions in the pathway lipid metabolism; polyunsaturated fatty acid biosynthesis. In Arabidopsis thaliana (Mouse-ear cress), this protein is Delta-9 desaturase-like 1 protein.